A 169-amino-acid chain; its full sequence is ATP synthase subunit b (169 aa).

A helical membrane pass occupies residues 26 to 46; sequence FFFVLLIFLIVLGVIAKWVVP.

This sequence belongs to the ATPase B chain family. F-type ATPases have 2 components, F(1) - the catalytic core - and F(0) - the membrane proton channel. F(1) has five subunits: alpha(3), beta(3), gamma(1), delta(1), epsilon(1). F(0) has three main subunits: a(1), b(2) and c(10-14). The alpha and beta chains form an alternating ring which encloses part of the gamma chain. F(1) is attached to F(0) by a central stalk formed by the gamma and epsilon chains, while a peripheral stalk is formed by the delta and b chains.

The protein localises to the cell membrane. In terms of biological role, f(1)F(0) ATP synthase produces ATP from ADP in the presence of a proton or sodium gradient. F-type ATPases consist of two structural domains, F(1) containing the extramembraneous catalytic core and F(0) containing the membrane proton channel, linked together by a central stalk and a peripheral stalk. During catalysis, ATP synthesis in the catalytic domain of F(1) is coupled via a rotary mechanism of the central stalk subunits to proton translocation. Component of the F(0) channel, it forms part of the peripheral stalk, linking F(1) to F(0). In Mycobacterium sp. (strain JLS), this protein is ATP synthase subunit b.